The sequence spans 2128 residues: Spectrin beta chain, erythrocytic (2128 aa).

The segment covering 1-15 (MTSATEFENVGNQPP) has biased composition (polar residues). Residues 1–30 (MTSATEFENVGNQPPFSRINARWDAPDDEL) form a disordered region. Residues 2–275 (TSATEFENVG…IITYVVAFYH (274 aa)) are actin-binding. The residue at position 36 (S36) is a Phosphoserine. Calponin-homology (CH) domains are found at residues 54 to 158 (VVQK…LRFQ) and 173 to 278 (RSAK…HYFS). Residue T104 is modified to Phosphothreonine. 17 Spectrin repeats span residues 303-411 (MIEK…LALR), 416-517 (RQEF…QRLE), 521-627 (ALQK…QLEQ), 630-733 (RLWK…DLQD), 736-838 (NFFQ…KLQE), 845-942 (VFGE…REAV), 950-1050 (NYCV…LSLG), 1054-1157 (KLQA…NTLT), 1162-1250 (FQEF…RHKK), 1267-1368 (ELQN…EQLS), 1381-1455 (ADLN…FLDL), 1473-1574 (LQIS…RLRD), 1576-1680 (HEAQ…RLEN), 1682-1784 (YHLF…MQLL), 1789-1890 (DLHR…RAQL), 1897-1997 (FRFF…DRLH), and 2004-2064 (QFSR…KPTT). S1289 carries the post-translational modification Phosphoserine. The residue at position 2034 (S2034) is a Phosphoserine. The disordered stretch occupies residues 2062 to 2108 (PTTLELKERQTPERPTEEPGPQEEEGETAGEAPQVHHAATERTSPVS). A phosphothreonine mark is found at T2064, T2072, and T2101. Basic and acidic residues predominate over residues 2066–2078 (ELKERQTPERPTE). 5 positions are modified to phosphoserine: S2105, S2108, S2114, S2116, and S2119.

This sequence belongs to the spectrin family. In terms of assembly, composed of nonhomologous chains, alpha and beta, which aggregate to form dimers, tetramers, and higher polymers. Interacts with BCAM.

Its subcellular location is the cytoplasm. The protein localises to the cytoskeleton. It localises to the cell cortex. Functionally, spectrin is the major constituent of the cytoskeletal network underlying the erythrocyte plasma membrane. It associates with band 4.1 and actin to form the cytoskeletal superstructure of the erythrocyte plasma membrane. This chain is Spectrin beta chain, erythrocytic (Sptb), found in Mus musculus (Mouse).